A 473-amino-acid chain; its full sequence is Photosystem II CP43 reaction center protein (473 aa).

A propeptide spanning residues M1–E14 is cleaved from the precursor. The residue at position 15 (T15) is an N-acetylthreonine. Position 15 is a phosphothreonine (T15). The next 5 membrane-spanning stretches (helical) occupy residues L69–A93, L134–N155, K178–T200, K255–S275, and W291–A312. E367 lines the [CaMn4O5] cluster pocket. The chain crosses the membrane as a helical span at residues R447 to P471.

This sequence belongs to the PsbB/PsbC family. PsbC subfamily. As to quaternary structure, PSII is composed of 1 copy each of membrane proteins PsbA, PsbB, PsbC, PsbD, PsbE, PsbF, PsbH, PsbI, PsbJ, PsbK, PsbL, PsbM, PsbT, PsbX, PsbY, PsbZ, Psb30/Ycf12, at least 3 peripheral proteins of the oxygen-evolving complex and a large number of cofactors. It forms dimeric complexes. The cofactor is Binds multiple chlorophylls and provides some of the ligands for the Ca-4Mn-5O cluster of the oxygen-evolving complex. It may also provide a ligand for a Cl- that is required for oxygen evolution. PSII binds additional chlorophylls, carotenoids and specific lipids..

The protein resides in the plastid. It localises to the chloroplast thylakoid membrane. In terms of biological role, one of the components of the core complex of photosystem II (PSII). It binds chlorophyll and helps catalyze the primary light-induced photochemical processes of PSII. PSII is a light-driven water:plastoquinone oxidoreductase, using light energy to abstract electrons from H(2)O, generating O(2) and a proton gradient subsequently used for ATP formation. The protein is Photosystem II CP43 reaction center protein of Nicotiana tabacum (Common tobacco).